The primary structure comprises 300 residues: GTPase Era (300 aa).

An Era-type G domain is found at 4–172 (KSGFVALAGK…LEKIKEELPE (169 aa)). Residues 12 to 19 (GKPNVGKS) are G1. A GTP-binding site is contributed by 12–19 (GKPNVGKS). The interval 38-42 (QTTRN) is G2. Residues 59–62 (DTPG) form a G3 region. Residues 59 to 63 (DTPGI) and 121 to 124 (NKID) each bind GTP. The segment at 121–124 (NKID) is G4. Positions 151 to 153 (ISA) are G5. In terms of domain architecture, KH type-2 spans 195-280 (IREKIFHLTR…YLDLNVKVKE (86 aa)).

This sequence belongs to the TRAFAC class TrmE-Era-EngA-EngB-Septin-like GTPase superfamily. Era GTPase family. Monomer.

The protein resides in the cytoplasm. It is found in the cell inner membrane. An essential GTPase that binds both GDP and GTP, with rapid nucleotide exchange. Plays a role in 16S rRNA processing and 30S ribosomal subunit biogenesis and possibly also in cell cycle regulation and energy metabolism. This chain is GTPase Era, found in Thermotoga maritima (strain ATCC 43589 / DSM 3109 / JCM 10099 / NBRC 100826 / MSB8).